The chain runs to 368 residues: MLYYILRYINELYSLPGMGVIEYLTFRASAAAITALLIIIFAGQRFIRFLKSKFVEPIKEEAPPEHRKKKDVPTMGGLMIIFAIEVSAFLWAKIDDPHVWLIMLAVFWMGLIGFIDDYQKVVLKVKGGLAGHYKLIGQVTLGLVIGFYTWNDPVFSVLLSDTTVPFFKKLSVDYGIFYIPVVIFIITAVSNAVNLTDGLDGLAAGNAAIVTFALGVFAYLCGNAVYSGYLSIPFISGAGEVAVVSMAIVMACVGFLWFNSSPAEVFMGDTGSLSLGSAIAVIALMIKQELLLPVLAGVFFVETLSVSMQVAWFKISKKLYGEGRRIFLMAPLHHHFQLKGWAEQKIVIRFWIISILLFLTSLMTLKLR.

Helical transmembrane passes span 23 to 43 (YLTFRASAAAITALLIIIFAG), 72 to 92 (VPTMGGLMIIFAIEVSAFLWA), 98 to 118 (HVWLIMLAVFWMGLIGFIDDY), 139 to 159 (VTLGLVIGFYTWNDPVFSVLL), 170 to 190 (LSVDYGIFYIPVVIFIITAVS), 201 to 221 (GLAAGNAAIVTFALGVFAYLC), 238 to 258 (AGEVAVVSMAIVMACVGFLWF), 281 to 301 (VIALMIKQELLLPVLAGVFFV), and 345 to 365 (KIVIRFWIISILLFLTSLMTL).

The protein belongs to the glycosyltransferase 4 family. MraY subfamily. It depends on Mg(2+) as a cofactor.

The protein localises to the cell inner membrane. The enzyme catalyses UDP-N-acetyl-alpha-D-muramoyl-L-alanyl-gamma-D-glutamyl-meso-2,6-diaminopimeloyl-D-alanyl-D-alanine + di-trans,octa-cis-undecaprenyl phosphate = di-trans,octa-cis-undecaprenyl diphospho-N-acetyl-alpha-D-muramoyl-L-alanyl-D-glutamyl-meso-2,6-diaminopimeloyl-D-alanyl-D-alanine + UMP. The protein operates within cell wall biogenesis; peptidoglycan biosynthesis. Functionally, catalyzes the initial step of the lipid cycle reactions in the biosynthesis of the cell wall peptidoglycan: transfers peptidoglycan precursor phospho-MurNAc-pentapeptide from UDP-MurNAc-pentapeptide onto the lipid carrier undecaprenyl phosphate, yielding undecaprenyl-pyrophosphoryl-MurNAc-pentapeptide, known as lipid I. The protein is Phospho-N-acetylmuramoyl-pentapeptide-transferase of Chlorobaculum tepidum (strain ATCC 49652 / DSM 12025 / NBRC 103806 / TLS) (Chlorobium tepidum).